The primary structure comprises 618 residues: UvrABC system protein C (618 aa).

The region spanning 13 to 92 (DKPGVYLMKN…IKKYRPKYNI (80 aa)) is the GIY-YIG domain. The 36-residue stretch at 204–239 (LDIVENFKLNMEKAAENLEFEKAAMLRDKINIIEKI) folds into the UVR domain.

Belongs to the UvrC family. Interacts with UvrB in an incision complex.

The protein resides in the cytoplasm. In terms of biological role, the UvrABC repair system catalyzes the recognition and processing of DNA lesions. UvrC both incises the 5' and 3' sides of the lesion. The N-terminal half is responsible for the 3' incision and the C-terminal half is responsible for the 5' incision. The polypeptide is UvrABC system protein C (Clostridium botulinum (strain Okra / Type B1)).